Reading from the N-terminus, the 369-residue chain is Anhydro-N-acetylmuramic acid kinase (369 aa).

Residue 12-19 coordinates ATP; that stretch reads GTSLDGVD.

This sequence belongs to the anhydro-N-acetylmuramic acid kinase family.

The catalysed reaction is 1,6-anhydro-N-acetyl-beta-muramate + ATP + H2O = N-acetyl-D-muramate 6-phosphate + ADP + H(+). Its pathway is amino-sugar metabolism; 1,6-anhydro-N-acetylmuramate degradation. It participates in cell wall biogenesis; peptidoglycan recycling. In terms of biological role, catalyzes the specific phosphorylation of 1,6-anhydro-N-acetylmuramic acid (anhMurNAc) with the simultaneous cleavage of the 1,6-anhydro ring, generating MurNAc-6-P. Is required for the utilization of anhMurNAc either imported from the medium or derived from its own cell wall murein, and thus plays a role in cell wall recycling. The chain is Anhydro-N-acetylmuramic acid kinase from Actinobacillus pleuropneumoniae serotype 7 (strain AP76).